We begin with the raw amino-acid sequence, 173 residues long: Sialic acid TRAP transporter small permease protein SiaQ (173 aa).

The next 4 helical transmembrane spans lie at 13 to 33, 46 to 66, 87 to 107, and 123 to 143; these read IEEI…TWQI, SEEL…AIAI, LSLV…IIVL, and LGIS…FMVF.

This sequence belongs to the TRAP transporter small permease family. As to quaternary structure, the complex comprises the extracytoplasmic solute receptor protein SiaP, and the two transmembrane proteins SiaQ and SiaM. SiaQ and SiaM form a tight 1:1 complex.

It localises to the cell inner membrane. In terms of biological role, part of the tripartite ATP-independent periplasmic (TRAP) transport system SiaPQM that catalyzes unidirectional Na(+)-dependent sialic acid uptake. The sequence is that of Sialic acid TRAP transporter small permease protein SiaQ from Vibrio cholerae serotype O1 (strain ATCC 39315 / El Tor Inaba N16961).